The following is a 408-amino-acid chain: Large ribosomal subunit protein uL4 (408 aa).

Residues 58 to 98 (PYAVSKKAGHQTSAESWGTGRAVSRIPRVPGGGTHRAGQGA) are disordered.

The protein belongs to the universal ribosomal protein uL4 family.

This chain is Large ribosomal subunit protein uL4 (RPL4), found in Prunus armeniaca (Apricot).